Consider the following 106-residue polypeptide: uncharacterized protein (106 aa).

2 helical membrane-spanning segments follow: residues 10-30 (VYIQMVAFSPYRIVLPFVAFV) and 65-85 (LDFASAFVVPAASFVESLLAY).

Its subcellular location is the membrane. This is an uncharacterized protein from Saccharomyces cerevisiae (strain ATCC 204508 / S288c) (Baker's yeast).